The following is a 64-amino-acid chain: Large ribosomal subunit protein bL35 (64 aa).

The disordered stretch occupies residues 1–27; sequence MPKMKTKSGAKKRFKPTASGFKHKHAF.

This sequence belongs to the bacterial ribosomal protein bL35 family.

This is Large ribosomal subunit protein bL35 from Azotobacter vinelandii (strain DJ / ATCC BAA-1303).